Reading from the N-terminus, the 148-residue chain is Protein GLUTAMINE DUMPER 3 (148 aa).

Residues 1-24 (MEGRQYYPPRENVEGNRTTMGGGP) form a disordered region. At 1–34 (MEGRQYYPPRENVEGNRTTMGGGPHSPWHSPVPY) the chain is on the extracellular side. The helical transmembrane segment at 35 to 55 (LFGGLAAMLGLIAFALLILAC) threads the bilayer. The Cytoplasmic portion of the chain corresponds to 56–148 (SYWRLSGYLD…RSSESNGETH (93 aa)). The VIMAG signature appears at 99–103 (VIMAG). Acidic residues predominate over residues 120–132 (CDDDDDEDDDVEG). The disordered stretch occupies residues 120–148 (CDDDDDEDDDVEGSDQVVPRSSESNGETH). A compositionally biased stretch (polar residues) spans 138–148 (PRSSESNGETH).

This sequence belongs to the GLUTAMINE DUMPER 1 (TC 9.B.60) family. As to expression, expressed in the vascular tissues. Also detected in anthers.

Its subcellular location is the membrane. Functionally, probable subunit of an amino acid transporter involved in the regulation of the amino acid metabolism. Stimulates amino acid export by activating nonselective amino acid facilitators. Acts upstream genes involved in the salicylic acid (SA) pathway and in the geminivirus-host interaction. The polypeptide is Protein GLUTAMINE DUMPER 3 (GDU3) (Arabidopsis thaliana (Mouse-ear cress)).